We begin with the raw amino-acid sequence, 361 residues long: Protein RecA (361 aa).

ATP is bound at residue 77–84 (GPESSGKT).

Belongs to the RecA family.

It localises to the cytoplasm. Its function is as follows. Can catalyze the hydrolysis of ATP in the presence of single-stranded DNA, the ATP-dependent uptake of single-stranded DNA by duplex DNA, and the ATP-dependent hybridization of homologous single-stranded DNAs. It interacts with LexA causing its activation and leading to its autocatalytic cleavage. The chain is Protein RecA from Brucella abortus (strain S19).